Consider the following 408-residue polypeptide: Imidazolonepropionase (408 aa).

Histidine 73 and histidine 75 together coordinate Fe(3+). Residues histidine 73 and histidine 75 each coordinate Zn(2+). 4-imidazolone-5-propanoate is bound by residues arginine 82, tyrosine 145, and histidine 178. Position 145 (tyrosine 145) interacts with N-formimidoyl-L-glutamate. Residue histidine 243 coordinates Fe(3+). Histidine 243 contributes to the Zn(2+) binding site. Glutamine 246 provides a ligand contact to 4-imidazolone-5-propanoate. Aspartate 318 contacts Fe(3+). A Zn(2+)-binding site is contributed by aspartate 318. The N-formimidoyl-L-glutamate site is built by asparagine 320 and glycine 322. Serine 323 lines the 4-imidazolone-5-propanoate pocket.

This sequence belongs to the metallo-dependent hydrolases superfamily. HutI family. Zn(2+) is required as a cofactor. Fe(3+) serves as cofactor.

Its subcellular location is the cytoplasm. It carries out the reaction 4-imidazolone-5-propanoate + H2O = N-formimidoyl-L-glutamate. The protein operates within amino-acid degradation; L-histidine degradation into L-glutamate; N-formimidoyl-L-glutamate from L-histidine: step 3/3. Catalyzes the hydrolytic cleavage of the carbon-nitrogen bond in imidazolone-5-propanoate to yield N-formimidoyl-L-glutamate. It is the third step in the universal histidine degradation pathway. The polypeptide is Imidazolonepropionase (Shewanella sp. (strain ANA-3)).